Here is a 131-residue protein sequence, read N- to C-terminus: Global transcriptional regulator Spx (131 aa).

A disulfide bond links Cys10 and Cys13.

It belongs to the ArsC family. Spx subfamily. Interacts with the C-terminal domain of the alpha subunit of the RNAP.

The protein resides in the cytoplasm. Global transcriptional regulator that plays a key role in stress response and exerts either positive or negative regulation of genes. Acts by interacting with the C-terminal domain of the alpha subunit of the RNA polymerase (RNAP). This interaction can enhance binding of RNAP to the promoter region of target genes and stimulate their transcription, or block interaction of RNAP with activator. This is Global transcriptional regulator Spx from Staphylococcus saprophyticus subsp. saprophyticus (strain ATCC 15305 / DSM 20229 / NCIMB 8711 / NCTC 7292 / S-41).